Here is a 360-residue protein sequence, read N- to C-terminus: Archaemetzincin-2 (360 aa).

His254 contacts Zn(2+). The active-site Proton acceptor is the Glu255. Zn(2+)-binding residues include His258, His264, Cys265, Cys270, Cys289, and Cys292.

It belongs to the peptidase M54 family. Zn(2+) is required as a cofactor. As to expression, down-regulated in testis from patients with maturation arrest (MA) or Sertoli cell-only syndrome (SCOS).

In terms of biological role, probable zinc metalloprotease. This Homo sapiens (Human) protein is Archaemetzincin-2 (AMZ2).